We begin with the raw amino-acid sequence, 482 residues long: tRNA sulfurtransferase (482 aa).

One can recognise a THUMP domain in the interval 61 to 165 (LAIRDALTRI…DDRLLLIKGR (105 aa)). Residues 183–184 (LI), Lys265, Gly287, and Gln296 each bind ATP. Cys344 and Cys456 are disulfide-bonded. Residues 404–482 (FGANDVILDI…GFANVKVYRP (79 aa)) enclose the Rhodanese domain. Cys456 (cysteine persulfide intermediate) is an active-site residue.

It belongs to the ThiI family.

The protein localises to the cytoplasm. It carries out the reaction [ThiI sulfur-carrier protein]-S-sulfanyl-L-cysteine + a uridine in tRNA + 2 reduced [2Fe-2S]-[ferredoxin] + ATP + H(+) = [ThiI sulfur-carrier protein]-L-cysteine + a 4-thiouridine in tRNA + 2 oxidized [2Fe-2S]-[ferredoxin] + AMP + diphosphate. The catalysed reaction is [ThiS sulfur-carrier protein]-C-terminal Gly-Gly-AMP + S-sulfanyl-L-cysteinyl-[cysteine desulfurase] + AH2 = [ThiS sulfur-carrier protein]-C-terminal-Gly-aminoethanethioate + L-cysteinyl-[cysteine desulfurase] + A + AMP + 2 H(+). It functions in the pathway cofactor biosynthesis; thiamine diphosphate biosynthesis. Catalyzes the ATP-dependent transfer of a sulfur to tRNA to produce 4-thiouridine in position 8 of tRNAs, which functions as a near-UV photosensor. Also catalyzes the transfer of sulfur to the sulfur carrier protein ThiS, forming ThiS-thiocarboxylate. This is a step in the synthesis of thiazole, in the thiamine biosynthesis pathway. The sulfur is donated as persulfide by IscS. The protein is tRNA sulfurtransferase of Salmonella typhi.